Consider the following 416-residue polypeptide: Putative UV-damage repair protein UvrX (416 aa).

The UmuC domain maps to 12 to 196 (ILCVDMKSFY…RPLSKMWGIG (185 aa)). Mg(2+)-binding residues include Asp16 and Asp115. Residue Glu116 is part of the active site.

This sequence belongs to the DNA polymerase type-Y family. Requires Mg(2+) as cofactor.

The chain is Putative UV-damage repair protein UvrX (uvrX) from Bacillus subtilis (strain 168).